Reading from the N-terminus, the 623-residue chain is uncharacterized protein (623 aa).

Transmembrane regions (helical) follow at residues 242–262, 288–308, 318–338, 361–381, and 387–407; these read IVLA…ITWL, IVSP…LDIF, VSMW…IALF, VINL…LLGV, and FNVS…ALAV.

This sequence belongs to the MscS (TC 1.A.23) family.

It is found in the cell membrane. This is an uncharacterized protein from Helicobacter pylori (strain ATCC 700392 / 26695) (Campylobacter pylori).